Consider the following 205-residue polypeptide: H/ACA ribonucleoprotein complex subunit GAR1 (205 aa).

Residues 1-23 (MSFRGGNRGGRGGFRGGFRGGRT) show a composition bias toward gly residues. Residues 1 to 31 (MSFRGGNRGGRGGFRGGFRGGRTGSARSFQQ) form a disordered region. Arg4 bears the Asymmetric dimethylarginine; by HMT1 mark. An RGG-box 1 region spans residues 4–21 (RGGNRGGRGGFRGGFRGG). An Asymmetric dimethylarginine; by HMT1; alternate modification is found at Arg8. Position 8 is an omega-N-methylarginine; by HMT1; alternate (Arg8). Arg11 is modified (asymmetric dimethylarginine; by HMT1). Asymmetric dimethylarginine; by HMT1; alternate is present on Arg15. Position 15 is an omega-N-methylarginine; by HMT1; alternate (Arg15). The residue at position 19 (Arg19) is an Asymmetric dimethylarginine; by HMT1. A Glycyl lysine isopeptide (Lys-Gly) (interchain with G-Cter in ubiquitin) cross-link involves residue Lys77. The disordered stretch occupies residues 124-205 (PKPKVVGPPK…SRGGFRGGRR (82 aa)). Positions 143–205 (APGGRGGASM…SRGGFRGGRR (63 aa)) are enriched in gly residues. Asymmetric dimethylarginine; by HMT1; alternate occurs at positions 147, 154, and 158. An omega-N-methylarginine; by HMT1; alternate mark is found at Arg147, Arg154, and Arg158. The interval 147-205 (RGGASMGRGGSRGGFRGGRGGSSFRGGRGGSSFRGGSRGGSFRGGSRGGSRGGFRGGRR) is RGG-box 2. Arg162 is subject to Asymmetric dimethylarginine; by HMT1. Arg165 carries the post-translational modification Asymmetric dimethylarginine; by HMT1; alternate. At Arg165 the chain carries Omega-N-methylarginine; by HMT1; alternate. Residues Arg171 and Arg174 each carry the asymmetric dimethylarginine; by HMT1 modification. An omega-N-methylarginine; by HMT1 mark is found at Arg180 and Arg184. At Arg189 the chain carries Asymmetric dimethylarginine; by HMT1; alternate. Omega-N-methylarginine; by HMT1; alternate is present on Arg189. Asymmetric dimethylarginine; by HMT1 occurs at positions 193, 197, and 201.

The protein belongs to the GAR1 family. In terms of assembly, component of the small nucleolar ribonucleoprotein particles containing H/ACA-type snoRNAs (H/ACA snoRNPs). The protein component of the H/ACA snoRNP contains CBF5, GAR1, NHP2 and NOP10. The complex contains a stable core composed of CBF5 and NOP10, to which GAR1 and NHP2 subsequently bind. Interacts with snoRNAs. In terms of processing, methylated by HMT1, forming asymmetric dimethylarginines (DMA) within a domain referred to as an RGG box, made up of repeated Gly-Gly dipeptides interspersed with Arg and aromatic residues.

It is found in the nucleus. The protein resides in the nucleolus. Non-catalytic component of the H/ACA small nucleolar ribonucleoprotein (H/ACA snoRNP), which catalyzes pseudouridylation of rRNA and is required for ribosome biogenesis. This involves the isomerization of uridine such that the ribose is subsequently attached to C5, instead of the normal N1. Pseudouridine ('psi') residues may serve to stabilize the conformation of rRNAs. The H/ACA snoRNP complex also mediates pseudouridylation of other types of RNAs. The H/ACA snoRNP complex mediates pseudouridylation at position 93 in U2 snRNA. Essential for growth. In Saccharomyces cerevisiae (strain ATCC 204508 / S288c) (Baker's yeast), this protein is H/ACA ribonucleoprotein complex subunit GAR1.